The chain runs to 482 residues: Bile acid receptor (482 aa).

A Glycyl lysine isopeptide (Lys-Gly) (interchain with G-Cter in SUMO1) cross-link involves residue Lys132. Residues 134 to 209 constitute a DNA-binding region (nuclear receptor); sequence DELCVVCGDR…MGMLAECLLT (76 aa). The NR C4-type zinc finger occupies 137 to 157; it reads CVVCGDRASGYHYNALTCEGC. Phosphoserine; by PKC/PRKCA is present on residues Ser145 and Ser164. Lys167 carries the N6-acetyllysine; by EP300 modification. The segment at 173–197 adopts an NR C4-type zinc-finger fold; the sequence is CKNGGNCVMDMYMRRKCQECRLRKC. Position 216 is an N6-methyllysine; by SETD7 (Lys216). Position 223 is an N6-acetyllysine; by EP300 (Lys223). The segment covering 229–240 has biased composition (basic and acidic residues); that stretch reads AIHEDSEGRDLR. A disordered region spans residues 229–253; it reads AIHEDSEGRDLRQVTSTTKSCREKT. Residues 258–482 form the NR LBD domain; the sequence is DQQNLLHYIM…PLLCEIWDVQ (225 aa). A Glycyl lysine isopeptide (Lys-Gly) (interchain with G-Cter in SUMO1) cross-link involves residue Lys285. 3 residues coordinate chenodeoxycholate: Arg341, Tyr371, and Tyr379. Thr452 bears the Phosphothreonine; by PKC/PRKCZ mark. Residue His457 coordinates chenodeoxycholate.

The protein belongs to the nuclear hormone receptor family. NR1 subfamily. Heterodimer with RXRA; the heterodimerization enhances the binding affinity for LXXLL motifs from coactivators. Binds DNA predominantly as a heterodimer with RXRA. After activation by agonist binding interacts with coactivators. Interacts with NCOA1, NCOA2, PPARGC1A, CARM1, SETD7, PRMT1, GPS2, SMARCA4 and MED1, EP300 and SMARCD1. Interacts with XRCC5 and XRCC6; decreasing NR1H4/FXR transactivation activity towards ABCB11/BSEP. Interacts with PAGR1 AND NCOA6; indicative for an association with an MLL2/MLL3 complex (ASCOM). In terms of processing, acetylated by EP300. Lys-223 as is the major acetylation site for EP300; the dynamicly regulated acetylation inhibits heterodimerization with RXRA and transactivation activity. Deacetylated by SIRT1. Post-translationally, methylation may increase transactivation of target genes. Phosphorylation by PKC/PRKCA increases transactivation activity by promoting association with PPARGC1A. In terms of processing, sumoylated upon ligand binding.

The protein localises to the nucleus. In terms of biological role, ligand-activated transcription factor. Receptor for bile acids (BAs) such as chenodeoxycholic acid (CDCA), lithocholic acid, deoxycholic acid (DCA) and allocholic acid (ACA). Plays a essential role in BA homeostasis through the regulation of genes involved in BA synthesis, conjugation and enterohepatic circulation. Also regulates lipid and glucose homeostasis and is involved innate immune response. The FXR-RXR heterodimer binds predominantly to farnesoid X receptor response elements (FXREs) containing two inverted repeats of the consensus sequence 5'-AGGTCA-3' in which the monomers are spaced by 1 nucleotide (IR-1) but also to tandem repeat DR1 sites with lower affinity, and can be activated by either FXR or RXR-specific ligands. It is proposed that monomeric nuclear receptors such as NR5A2/LRH-1 bound to coregulatory nuclear responsive element (NRE) halfsites located in close proximity to FXREs modulate transcriptional activity. In the liver activates transcription of the corepressor NR0B2 thereby indirectly inhibiting CYP7A1 and CYP8B1 (involved in BA synthesis) implicating at least in part histone demethylase KDM1A resulting in epigenomic repression, and SLC10A1/NTCP (involved in hepatic uptake of conjugated BAs). Activates transcription of the repressor MAFG (involved in regulation of BA synthesis). Activates transcription of SLC27A5/BACS and BAAT (involved in BA conjugation), ABCB11/BSEP (involved in bile salt export) by directly recruiting histone methyltransferase CARM1, and ABCC2/MRP2 (involved in secretion of conjugated BAs) and ABCB4 (involved in secretion of phosphatidylcholine in the small intestine). Activates transcription of SLC27A5/BACS and BAAT (involved in BA conjugation), ABCB11/BSEP (involved in bile salt export) by directly recruiting histone methyltransferase CARM1, and ABCC2/MRP2 (involved in secretion of conjugated BAs) and ABCB4 (involved in secretion of phosphatidylcholine in the small intestine). In the intestine activates FGF19 expression and secretion leading to hepatic CYP7A1 repression. The function also involves the coordinated induction of hepatic KLB/beta-klotho expression. Regulates transcription of liver UGT2B4 and SULT2A1 involved in BA detoxification; binding to the UGT2B4 promoter seems to imply a monomeric transactivation independent of RXRA. Modulates lipid homeostasis by activating liver NR0B2/SHP-mediated repression of SREBF1 (involved in de novo lipogenesis), expression of PLTP (involved in HDL formation), SCARB1 (involved in HDL hepatic uptake), APOE, APOC1, APOC4, PPARA (involved in beta-oxidation of fatty acids), VLDLR and SDC1 (involved in the hepatic uptake of LDL and IDL remnants), and inhibiting expression of MTTP (involved in VLDL assembly). Increases expression of APOC2 (promoting lipoprotein lipase activity implicated in triglyceride clearance). Transrepresses APOA1 involving a monomeric competition with NR2A1 for binding to a DR1 element. Also reduces triglyceride clearance by inhibiting expression of ANGPTL3 and APOC3 (both involved in inhibition of lipoprotein lipase). Involved in glucose homeostasis by modulating hepatic gluconeogenesis through activation of NR0B2/SHP-mediated repression of respective genes. Modulates glycogen synthesis (inducing phosphorylation of glycogen synthase kinase-3). Modulates glucose-stimulated insulin secretion and is involved in insulin resistance. Involved in intestinal innate immunity. Plays a role in protecting the distal small intestine against bacterial overgrowth and preservation of the epithelial barrier. Down-regulates inflammatory cytokine expression in several types of immune cells including macrophages and mononuclear cells. Mediates trans-repression of TLR4-induced cytokine expression; the function seems to require its sumoylation and prevents N-CoR nuclear receptor corepressor clearance from target genes such as IL1B and NOS2. Involved in the TLR9-mediated protective mechanism in intestinal inflammation. Plays an anti-inflammatory role in liver inflammation; proposed to inhibit pro-inflammatory (but not antiapoptotic) NF-kappa-B signaling. The protein is Bile acid receptor (NR1H4) of Bos taurus (Bovine).